Here is a 204-residue protein sequence, read N- to C-terminus: Ribosome maturation factor RimP (204 aa).

It belongs to the RimP family.

The protein localises to the cytoplasm. In terms of biological role, required for maturation of 30S ribosomal subunits. The sequence is that of Ribosome maturation factor RimP from Allorhizobium ampelinum (strain ATCC BAA-846 / DSM 112012 / S4) (Agrobacterium vitis (strain S4)).